The primary structure comprises 350 residues: Protein FAM118B (350 aa).

Ala-2 is subject to N-acetylalanine. The residue at position 9 (Ser-9) is a Phosphoserine. Residues 330 to 350 (AREGQLNGSSAAHGEIRGCST) are disordered.

It belongs to the FAM118 family.

The protein resides in the nucleus. It is found in the cajal body. Functionally, may play a role in Cajal bodies formation. This Rattus norvegicus (Rat) protein is Protein FAM118B (Fam118b).